The following is a 361-amino-acid chain: Phospho-N-acetylmuramoyl-pentapeptide-transferase (361 aa).

Helical transmembrane passes span 25–45, 71–91, 94–114, 133–153, 169–189, 200–220, 240–260, 264–284, 289–309, and 338–358; these read TGGA…WIID, TPTM…VLWA, LNPY…VGFY, WRLL…VRLG, VAIN…VGAG, GLAI…SYLA, LSVL…FNAP, IFMG…IAVA, IVLA…IVQV, and QIVI…LSTL.

Belongs to the glycosyltransferase 4 family. MraY subfamily. Mg(2+) serves as cofactor.

It is found in the cell inner membrane. It catalyses the reaction UDP-N-acetyl-alpha-D-muramoyl-L-alanyl-gamma-D-glutamyl-meso-2,6-diaminopimeloyl-D-alanyl-D-alanine + di-trans,octa-cis-undecaprenyl phosphate = di-trans,octa-cis-undecaprenyl diphospho-N-acetyl-alpha-D-muramoyl-L-alanyl-D-glutamyl-meso-2,6-diaminopimeloyl-D-alanyl-D-alanine + UMP. It participates in cell wall biogenesis; peptidoglycan biosynthesis. In terms of biological role, catalyzes the initial step of the lipid cycle reactions in the biosynthesis of the cell wall peptidoglycan: transfers peptidoglycan precursor phospho-MurNAc-pentapeptide from UDP-MurNAc-pentapeptide onto the lipid carrier undecaprenyl phosphate, yielding undecaprenyl-pyrophosphoryl-MurNAc-pentapeptide, known as lipid I. This Rhodopseudomonas palustris (strain BisB18) protein is Phospho-N-acetylmuramoyl-pentapeptide-transferase.